Consider the following 353-residue polypeptide: T-complex protein 1 subunit eta (353 aa).

Belongs to the TCP-1 chaperonin family. In terms of assembly, heterooligomeric complex of about 850 to 900 kDa that forms two stacked rings, 12 to 16 nm in diameter.

It localises to the cytoplasm. Functionally, molecular chaperone; assists the folding of proteins upon ATP hydrolysis. Known to play a role, in vitro, in the folding of actin and tubulin. This chain is T-complex protein 1 subunit eta, found in Tetrahymena thermophila.